Here is a 482-residue protein sequence, read N- to C-terminus: Serine decarboxylase 1 (482 aa).

The interval 36–55 is disordered; the sequence is EVESPPRPAEEEGEGSPTRR. His-200 is a binding site for substrate. Lys-312 is subject to N6-(pyridoxal phosphate)lysine.

It belongs to the group II decarboxylase family. Pyridoxal 5'-phosphate serves as cofactor.

It carries out the reaction L-serine + H(+) = ethanolamine + CO2. In terms of biological role, catalyzes the biosynthesis of ethanolamine from serine. Decarboxylation of free serine is the major source of ethanolamine production in plants and ethanolamine metabolism is crucial for the synthesis of choline, phosphatidylethanolamine (PE) and phosphatidylcholine (PC), and thus for plant growth. This Oryza sativa subsp. japonica (Rice) protein is Serine decarboxylase 1 (SDC1).